An 88-amino-acid polypeptide reads, in one-letter code: Arminin 7965 (88 aa).

Positions 1-18 (MKTVFAILFLTFIAFTYA) are cleaved as a signal peptide. A propeptide spanning residues 19–57 (KSYEDVKEEIKNEVEREIFEDLEEESDVLDSNVRELNDA) is cleaved from the precursor. Alanine amide is present on A85.

It belongs to the arminin family. Expressed in entodermal epithelium along the body column.

The protein localises to the secreted. It is found in the target cell membrane. In terms of biological role, antimicrobial peptide with a broad-spectrum antimicrobial activity. Keeps its antibacterial activity under a wide range of salt concentrations that mimic physiological conditions of human blood, which is surprising, since Hydra is an obligate freshwater animal with nearly no salt tolerance. Does not affect red blood cells. This is Arminin 7965 from Hydra vulgaris (Hydra).